A 340-amino-acid chain; its full sequence is Dihydroorotase (340 aa).

Zn(2+) contacts are provided by histidine 14 and histidine 16. Residues 16–18 and asparagine 42 contribute to the substrate site; that span reads HLR. Zn(2+) contacts are provided by lysine 100, histidine 137, and histidine 175. An N6-carboxylysine modification is found at lysine 100. Residue histidine 137 participates in substrate binding. Substrate is bound at residue leucine 220. Residue aspartate 248 coordinates Zn(2+). Aspartate 248 is a catalytic residue. Substrate is bound by residues histidine 252 and alanine 264.

The protein belongs to the metallo-dependent hydrolases superfamily. DHOase family. Class II DHOase subfamily. Homodimer. Zn(2+) serves as cofactor.

The enzyme catalyses (S)-dihydroorotate + H2O = N-carbamoyl-L-aspartate + H(+). It participates in pyrimidine metabolism; UMP biosynthesis via de novo pathway; (S)-dihydroorotate from bicarbonate: step 3/3. Its function is as follows. Catalyzes the reversible cyclization of carbamoyl aspartate to dihydroorotate. This chain is Dihydroorotase, found in Sphingopyxis alaskensis (strain DSM 13593 / LMG 18877 / RB2256) (Sphingomonas alaskensis).